Reading from the N-terminus, the 359-residue chain is Peptide chain release factor 1 (359 aa).

Glutamine 236 is subject to N5-methylglutamine.

The protein belongs to the prokaryotic/mitochondrial release factor family. In terms of processing, methylated by PrmC. Methylation increases the termination efficiency of RF1.

It localises to the cytoplasm. Peptide chain release factor 1 directs the termination of translation in response to the peptide chain termination codons UAG and UAA. The sequence is that of Peptide chain release factor 1 from Ureaplasma parvum serovar 3 (strain ATCC 27815 / 27 / NCTC 11736).